Reading from the N-terminus, the 209-residue chain is dITP/XTP pyrophosphatase (209 aa).

7–12 is a substrate binding site; sequence SSHGYK. The active-site Proton acceptor is the D70. Mg(2+) is bound at residue D70. Residues S71, 154–157, K177, and 182–183 contribute to the substrate site; these read FGYD and HR.

It belongs to the HAM1 NTPase family. As to quaternary structure, homodimer. The cofactor is Mg(2+).

It catalyses the reaction XTP + H2O = XMP + diphosphate + H(+). The enzyme catalyses dITP + H2O = dIMP + diphosphate + H(+). It carries out the reaction ITP + H2O = IMP + diphosphate + H(+). In terms of biological role, pyrophosphatase that catalyzes the hydrolysis of nucleoside triphosphates to their monophosphate derivatives, with a high preference for the non-canonical purine nucleotides XTP (xanthosine triphosphate), dITP (deoxyinosine triphosphate) and ITP. Seems to function as a house-cleaning enzyme that removes non-canonical purine nucleotides from the nucleotide pool, thus preventing their incorporation into DNA/RNA and avoiding chromosomal lesions. The protein is dITP/XTP pyrophosphatase of Chlamydia trachomatis serovar L2 (strain ATCC VR-902B / DSM 19102 / 434/Bu).